The following is a 100-amino-acid chain: Urease subunit gamma (100 aa).

Belongs to the urease gamma subunit family. As to quaternary structure, heterotrimer of UreA (gamma), UreB (beta) and UreC (alpha) subunits. Three heterotrimers associate to form the active enzyme.

Its subcellular location is the cytoplasm. It carries out the reaction urea + 2 H2O + H(+) = hydrogencarbonate + 2 NH4(+). It functions in the pathway nitrogen metabolism; urea degradation; CO(2) and NH(3) from urea (urease route): step 1/1. The polypeptide is Urease subunit gamma (Rhizobium leguminosarum bv. viciae).